An 810-amino-acid chain; its full sequence is Actin-regulating kinase PRK1 (810 aa).

A Protein kinase domain is found at alanine 22–leucine 298. Residues leucine 28–valine 36 and lysine 56 contribute to the ATP site. Residue aspartate 158 is the Proton acceptor of the active site. Residues serine 402, serine 428, and serine 484 each carry the phosphoserine modification. Disordered stretches follow at residues phenylalanine 552–isoleucine 668 and glycine 733–threonine 761. Phosphothreonine is present on threonine 553. Polar residues predominate over residues threonine 553–aspartate 566. The residue at position 556 (serine 556) is a Phosphoserine. Positions asparagine 567–serine 588 are enriched in low complexity. Composition is skewed to basic and acidic residues over residues serine 594–arginine 612 and phenylalanine 622–arginine 639. Low complexity predominate over residues lysine 645–threonine 658. Residues glycine 733–arginine 748 are compositionally biased toward basic and acidic residues. Residues glycine 743–proline 756 are interaction with SH3 domain of ABP1.

This sequence belongs to the protein kinase superfamily. Ser/Thr protein kinase family. Interacts with ABP1, which is required for proper actin patch localization.

The protein localises to the cytoplasm. It localises to the cytoskeleton. Its subcellular location is the actin patch. It carries out the reaction L-seryl-[protein] + ATP = O-phospho-L-seryl-[protein] + ADP + H(+). It catalyses the reaction L-threonyl-[protein] + ATP = O-phospho-L-threonyl-[protein] + ADP + H(+). Its function is as follows. Protein kinase involved in the regulation of actin cytoskeleton organization and endocytosis. Phosphorylates PAN1 which disrupts the interaction between PAN1 and END3, and between PAN1 and SLA1. Phosphorylates SCD5. Preferentially, phosphorylates substrates on threonine residues in a [L/I/V/M]-x-x-[Q/N/T/S]-x-T-G motif. The chain is Actin-regulating kinase PRK1 (PRK1) from Saccharomyces cerevisiae (strain ATCC 204508 / S288c) (Baker's yeast).